Here is a 64-residue protein sequence, read N- to C-terminus: Large ribosomal subunit protein bL35 (64 aa).

The disordered stretch occupies residues 1–23; sequence MPKMKTKSGAAKRFKKTANGFKH.

It belongs to the bacterial ribosomal protein bL35 family.

This Stutzerimonas stutzeri (strain A1501) (Pseudomonas stutzeri) protein is Large ribosomal subunit protein bL35.